A 283-amino-acid chain; its full sequence is Polyamine aminopropyltransferase (283 aa).

The region spanning 5–238 is the PABS domain; sequence PTWIDEYHKG…GIWSWTFASD (234 aa). Glutamine 32 contacts S-methyl-5'-thioadenosine. Spermidine-binding residues include histidine 63 and aspartate 87. S-methyl-5'-thioadenosine contacts are provided by residues glutamate 107 and 139 to 140; that span reads DG. The Proton acceptor role is filled by aspartate 158. 158 to 161 contacts spermidine; sequence DCSD.

It belongs to the spermidine/spermine synthase family. In terms of assembly, homodimer or homotetramer.

The protein resides in the cytoplasm. The enzyme catalyses S-adenosyl 3-(methylsulfanyl)propylamine + putrescine = S-methyl-5'-thioadenosine + spermidine + H(+). The protein operates within amine and polyamine biosynthesis; spermidine biosynthesis; spermidine from putrescine: step 1/1. Functionally, catalyzes the irreversible transfer of a propylamine group from the amino donor S-adenosylmethioninamine (decarboxy-AdoMet) to putrescine (1,4-diaminobutane) to yield spermidine. The chain is Polyamine aminopropyltransferase from Prochlorococcus marinus subsp. pastoris (strain CCMP1986 / NIES-2087 / MED4).